Here is a 340-residue protein sequence, read N- to C-terminus: Ketol-acid reductoisomerase (NADP(+)) (340 aa).

Residues 3–182 (VTMYYEDDVE…GCARVGIIET (180 aa)) enclose the KARI N-terminal Rossmann domain. NADP(+)-binding positions include 26–29 (YGSQ), Arg49, Ser53, and 83–86 (DELQ). Residue His108 is part of the active site. Gly134 serves as a coordination point for NADP(+). The KARI C-terminal knotted domain maps to 183 to 328 (TFKEETEEDL…AELRKAMPFT (146 aa)). Asp191, Glu195, Glu227, and Glu231 together coordinate Mg(2+). Ser252 is a binding site for substrate.

The protein belongs to the ketol-acid reductoisomerase family. The cofactor is Mg(2+).

It carries out the reaction (2R)-2,3-dihydroxy-3-methylbutanoate + NADP(+) = (2S)-2-acetolactate + NADPH + H(+). It catalyses the reaction (2R,3R)-2,3-dihydroxy-3-methylpentanoate + NADP(+) = (S)-2-ethyl-2-hydroxy-3-oxobutanoate + NADPH + H(+). It functions in the pathway amino-acid biosynthesis; L-isoleucine biosynthesis; L-isoleucine from 2-oxobutanoate: step 2/4. The protein operates within amino-acid biosynthesis; L-valine biosynthesis; L-valine from pyruvate: step 2/4. Involved in the biosynthesis of branched-chain amino acids (BCAA). Catalyzes an alkyl-migration followed by a ketol-acid reduction of (S)-2-acetolactate (S2AL) to yield (R)-2,3-dihydroxy-isovalerate. In the isomerase reaction, S2AL is rearranged via a Mg-dependent methyl migration to produce 3-hydroxy-3-methyl-2-ketobutyrate (HMKB). In the reductase reaction, this 2-ketoacid undergoes a metal-dependent reduction by NADPH to yield (R)-2,3-dihydroxy-isovalerate. The chain is Ketol-acid reductoisomerase (NADP(+)) from Lactococcus lactis subsp. lactis (strain IL1403) (Streptococcus lactis).